The following is a 177-amino-acid chain: Centromere protein R (177 aa).

A Glycyl lysine isopeptide (Lys-Gly) (interchain with G-Cter in SUMO2) cross-link involves residue lysine 8. An LXXLL motif motif is present at residues 9 to 13 (LDGLL). Serine 17 is subject to Phosphoserine. Residues 20–50 (PSKITRKKSVITYSPTTGTCQMSLFASPTSS) are DD1. A Glycyl lysine isopeptide (Lys-Gly) (interchain with G-Cter in SUMO2) cross-link involves residue lysine 22. Serine 28 bears the Phosphoserine mark. A compositionally biased stretch (polar residues) spans 41-50 (MSLFASPTSS). The interval 41-81 (MSLFASPTSSEEQKHRNGLSNEKRKKLNHPSLTESKESTTK) is disordered. The short motif at 63-66 (KRKK) is the Nuclear localization signal element. At serine 71 the chain carries Phosphoserine. The stretch at 83–113 (NDEFMMLLSKVEKLSEEIMEIMQNLSSIQAL) forms a coiled coil. Residues 172-176 (LKAIL) carry the LXXIL motif motif.

Homodimer; mediated by the coiled coil domain. Isoform 3, but not other isoforms, interacts with the cytoplasmic tail of integrin ITGB3. The relevance of the interaction with ITGB3 is however uncertain, since isoform 3 is mainly nuclear. Interacts with CCNA2 and MTA1. Interacts with NFKB1 NF-kappa-B subunit. Component of the CENPA-CAD complex, composed of CENPI, CENPK, CENPL, CENPO, CENPP, CENPQ, CENPR and CENPS. The CENPA-CAD complex interacts with the CENPA-NAC complex, at least composed of CENPA, CENPC, CENPH, CENPM, CENPN, CENPT and CENPU. Interacts with TASOR. In terms of tissue distribution, widely expressed. Expressed in spleen, thymus, prostate, ovary, small intestine and white blood cells. Highly expressed in testis and colon. Isoform 4 is expressed in platelets, lymphocytes and granulocytes.

The protein resides in the nucleus. It is found in the chromosome. It localises to the centromere. The protein localises to the kinetochore. Its subcellular location is the cytoplasm. Functionally, transcription coregulator that can have both coactivator and corepressor functions. Isoform 1, but not other isoforms, is involved in the coactivation of nuclear receptors for retinoid X (RXRs) and thyroid hormone (TRs) in a ligand-dependent fashion. In contrast, it does not coactivate nuclear receptors for retinoic acid, vitamin D, progesterone receptor, nor glucocorticoid. Acts as a coactivator for estrogen receptor alpha. Acts as a transcriptional corepressor via its interaction with the NFKB1 NF-kappa-B subunit, possibly by interfering with the transactivation domain of NFKB1. Induces apoptosis in breast cancer cells, but not in other cancer cells, via a caspase-2 mediated pathway that involves mitochondrial membrane permeabilization but does not require other caspases. May also act as an inhibitor of cyclin A-associated kinase. Also acts a component of the CENPA-CAD (nucleosome distal) complex, a complex recruited to centromeres which is involved in assembly of kinetochore proteins, mitotic progression and chromosome segregation. May be involved in incorporation of newly synthesized CENPA into centromeres via its interaction with the CENPA-NAC complex. In Homo sapiens (Human), this protein is Centromere protein R (ITGB3BP).